We begin with the raw amino-acid sequence, 150 residues long: Lymphocyte antigen 6 complex locus protein G5c (150 aa).

The N-terminal stretch at 1-41 (MRFMAGPAGSQSLGPLCFHSSPQALYTVLLIVLVMMSLVFG) is a signal peptide. Residues 60–150 (LRCYRCLLET…DPQNRGLYTP (91 aa)) enclose the UPAR/Ly6 domain. 4 disulfide bridges follow: cysteine 62-cysteine 89, cysteine 65-cysteine 74, cysteine 81-cysteine 107, and cysteine 134-cysteine 139. Residue asparagine 96 is glycosylated (N-linked (GlcNAc...) asparagine).

As to quaternary structure, forms oligomers. In terms of processing, N-glycosylated. As to expression, detected in T-cell lines and fetal and adult lung.

Its subcellular location is the secreted. Functionally, may have a role in hematopoietic cell differentiation. This is Lymphocyte antigen 6 complex locus protein G5c (LY6G5C) from Homo sapiens (Human).